Here is a 768-residue protein sequence, read N- to C-terminus: Putative calcium up-regulated protein H (768 aa).

The tract at residues 1 to 22 (MINIEDISKSSNQSEEKQLKST) is disordered. 2 consecutive Ricin B-type lectin domains span residues 25 to 145 (KPKY…WTTF) and 116 to 248 (QGNG…WGIN).

It belongs to the cup family.

It localises to the cytoplasm. It is found in the membrane. Functionally, may play an important role in stabilizing and/or regulating the cell membrane during Ca(2+) stress or certain stages of development. In Dictyostelium discoideum (Social amoeba), this protein is Putative calcium up-regulated protein H (cupH).